Consider the following 403-residue polypeptide: tRNA pseudouridine synthase 4 (403 aa).

The Nucleophile role is filled by aspartate 75.

This sequence belongs to the pseudouridine synthase TruB family.

The protein localises to the nucleus. The protein resides in the mitochondrion. It catalyses the reaction uridine(55) in tRNA = pseudouridine(55) in tRNA. The enzyme catalyses a uridine in mRNA = a pseudouridine in mRNA. Responsible for synthesis of pseudouridine from uracil-55 in the psi GC loop of transfer RNAs. Also catalyzes pseudouridylation of mRNAs with the consensus sequence 5'-GGUUCRA-3'. The protein is tRNA pseudouridine synthase 4 (PUS4) of Saccharomyces cerevisiae (strain ATCC 204508 / S288c) (Baker's yeast).